Reading from the N-terminus, the 137-residue chain is Small ribosomal subunit protein uS9 (137 aa).

Belongs to the universal ribosomal protein uS9 family.

The chain is Small ribosomal subunit protein uS9 (rps9) from Sulfurisphaera tokodaii (strain DSM 16993 / JCM 10545 / NBRC 100140 / 7) (Sulfolobus tokodaii).